The primary structure comprises 479 residues: Ubiquinone biosynthesis monooxygenase COQ6, mitochondrial (479 aa).

The protein belongs to the UbiH/COQ6 family. In terms of assembly, component of a multi-subunit COQ enzyme complex, composed of at least COQ3, COQ4, COQ5, COQ6, COQ7 and COQ9. It depends on FAD as a cofactor.

The protein localises to the mitochondrion inner membrane. The enzyme catalyses 4-hydroxy-3-(all-trans-decaprenyl)benzoate + 2 reduced [2Fe-2S]-[ferredoxin] + O2 + 2 H(+) = 3,4-dihydroxy-5-(all-trans-decaprenyl)benzoate + 2 oxidized [2Fe-2S]-[ferredoxin] + H2O. It catalyses the reaction 2-methoxy-6-(all-trans-decaprenyl)phenol + 2 reduced [2Fe-2S]-[ferredoxin] + O2 + 2 H(+) = 2-methoxy-6-(all-trans-decaprenyl)benzene-1,4-diol + 2 oxidized [2Fe-2S]-[ferredoxin] + H2O. Its pathway is cofactor biosynthesis; ubiquinone biosynthesis. In terms of biological role, FAD-dependent monooxygenase required for two non-consecutive steps during ubiquinone biosynthesis. Required for the C5-ring hydroxylation during ubiquinone biosynthesis by catalyzing the hydroxylation of 4-hydroxy-3-(all-trans-decaprenyl)benzoic acid to 3,4-dihydroxy-5-(all-trans-decaprenyl)benzoic acid. Also acts downstream of COQ4, for the C1-hydroxylation during ubiquinone biosynthesis by catalyzing the hydroxylation of 2-methoxy-6-(all-trans-decaprenyl)phenol to 2-methoxy-6-(all-trans-decaprenyl)benzene-1,4-diol. The electrons required for the hydroxylation reaction are funneled indirectly to coq6 from NADPH via a ferredoxin/ferredoxin reductase system. The chain is Ubiquinone biosynthesis monooxygenase COQ6, mitochondrial from Schizosaccharomyces pombe (strain 972 / ATCC 24843) (Fission yeast).